We begin with the raw amino-acid sequence, 219 residues long: Large ribosomal subunit protein bL25 (219 aa).

The interval 188 to 219 (TVAAPADTAVQPESSSTKGKKDEDGALAKDKK) is disordered. The span at 206–219 (GKKDEDGALAKDKK) shows a compositional bias: basic and acidic residues.

The protein belongs to the bacterial ribosomal protein bL25 family. CTC subfamily. As to quaternary structure, part of the 50S ribosomal subunit; part of the 5S rRNA/L5/L18/L25 subcomplex. Contacts the 5S rRNA. Binds to the 5S rRNA independently of L5 and L18.

Its function is as follows. This is one of the proteins that binds to the 5S RNA in the ribosome where it forms part of the central protuberance. This is Large ribosomal subunit protein bL25 from Elusimicrobium minutum (strain Pei191).